We begin with the raw amino-acid sequence, 413 residues long: Tyrosine--tRNA ligase 2 (413 aa).

The short motif at 58–67 (PSAPDVHLGH) is the 'HIGH' region element. A run of 2 repeats spans residues 89–94 (GDFTGK) and 96–101 (GDPTGK). The interval 89 to 101 (GDFTGKIGDPTGK) is 2 X 6 AA tandem repeats. The 'KMSKS' region motif lies at 242–246 (KMSKS). An ATP-binding site is contributed by K245. Positions 353-413 (IAMIDLLVKL…VGKRKFLKLQ (61 aa)) constitute an S4 RNA-binding domain.

The protein belongs to the class-I aminoacyl-tRNA synthetase family. TyrS type 2 subfamily. As to quaternary structure, homodimer.

It localises to the cytoplasm. It catalyses the reaction tRNA(Tyr) + L-tyrosine + ATP = L-tyrosyl-tRNA(Tyr) + AMP + diphosphate + H(+). Catalyzes the attachment of tyrosine to tRNA(Tyr) in a two-step reaction: tyrosine is first activated by ATP to form Tyr-AMP and then transferred to the acceptor end of tRNA(Tyr). The protein is Tyrosine--tRNA ligase 2 of Bacillus subtilis (strain 168).